The following is a 175-amino-acid chain: Deoxyuridine 5'-triphosphate nucleotidohydrolase (175 aa).

Substrate is bound by residues 67 to 69 (RSG), Asn80, 84 to 86 (TVD), and Lys94. The interval 138–175 (RAEGGFGSTGGHAAVGADTNGQQGGNRYASVVSDRKGQ) is disordered.

It belongs to the dUTPase family. Mg(2+) serves as cofactor.

The catalysed reaction is dUTP + H2O = dUMP + diphosphate + H(+). Its pathway is pyrimidine metabolism; dUMP biosynthesis; dUMP from dCTP (dUTP route): step 2/2. This enzyme is involved in nucleotide metabolism: it produces dUMP, the immediate precursor of thymidine nucleotides and it decreases the intracellular concentration of dUTP so that uracil cannot be incorporated into DNA. The protein is Deoxyuridine 5'-triphosphate nucleotidohydrolase of Streptomyces avermitilis (strain ATCC 31267 / DSM 46492 / JCM 5070 / NBRC 14893 / NCIMB 12804 / NRRL 8165 / MA-4680).